The primary structure comprises 638 residues: Ubiquitin-like-specific protease 2 (638 aa).

The span at 1-12 (MRDSKDALDDKS) shows a compositional bias: basic and acidic residues. Disordered regions lie at residues 1-79 (MRDS…PKHL) and 238-314 (PQKT…TSND). The span at 238–249 (PQKTVRSIVKQT) shows a compositional bias: polar residues. Low complexity predominate over residues 250-264 (SSPHSSKMPKHSLPS). The segment covering 267-314 (TPFNSNSGDSLLSRIKNSNQSSSERPTANNGAQEQNQSSSSAGNTSND) has biased composition (polar residues). Active-site residues include His440 and Asp494. Position 526 is a phosphothreonine (Thr526). Cys544 is a catalytic residue. Positions 610–619 (NERQSLSSGS) are enriched in polar residues. Residues 610–638 (NERQSLSSGSNDEEDKENDDDLAILPITN) are disordered. Acidic residues predominate over residues 620–631 (NDEEDKENDDDL).

This sequence belongs to the peptidase C48 family.

The protein resides in the nucleus. The chain is Ubiquitin-like-specific protease 2 (ulp2) from Schizosaccharomyces pombe (strain 972 / ATCC 24843) (Fission yeast).